We begin with the raw amino-acid sequence, 127 residues long: Calcitonin receptor-stimulating peptide 1 (127 aa).

The first 25 residues, methionine 1–alanine 25, serve as a signal peptide directing secretion. A propeptide spanning residues alanine 26–glutamine 79 is cleaved from the precursor. Cysteine 83 and cysteine 88 are oxidised to a cystine.

It belongs to the calcitonin family.

Its subcellular location is the secreted. Functionally, stimulates cAMP production in porcine kidney cell line LLC-PK1 via the calcitonin receptor (CT) but not via the CT-like (CL) receptor. This Canis lupus familiaris (Dog) protein is Calcitonin receptor-stimulating peptide 1 (CRSP1).